Reading from the N-terminus, the 332-residue chain is Glyceraldehyde-3-phosphate dehydrogenase (332 aa).

NAD(+) contacts are provided by residues 11–12 (RI), D34, R78, and S120. D-glyceraldehyde 3-phosphate is bound by residues 151 to 153 (SCT), T182, R197, 210 to 211 (TG), and R233. Residue C152 is the Nucleophile of the active site. N314 contacts NAD(+).

Belongs to the glyceraldehyde-3-phosphate dehydrogenase family. As to quaternary structure, homotetramer.

The protein localises to the cytoplasm. The catalysed reaction is D-glyceraldehyde 3-phosphate + phosphate + NAD(+) = (2R)-3-phospho-glyceroyl phosphate + NADH + H(+). It functions in the pathway carbohydrate degradation; glycolysis; pyruvate from D-glyceraldehyde 3-phosphate: step 1/5. Functionally, catalyzes the oxidative phosphorylation of glyceraldehyde 3-phosphate (G3P) to 1,3-bisphosphoglycerate (BPG) using the cofactor NAD. The first reaction step involves the formation of a hemiacetal intermediate between G3P and a cysteine residue, and this hemiacetal intermediate is then oxidized to a thioester, with concomitant reduction of NAD to NADH. The reduced NADH is then exchanged with the second NAD, and the thioester is attacked by a nucleophilic inorganic phosphate to produce BPG. The polypeptide is Glyceraldehyde-3-phosphate dehydrogenase (gap) (Kitasatospora aureofaciens (Streptomyces aureofaciens)).